Reading from the N-terminus, the 507-residue chain is ATP-dependent RNA helicase DDX47 (507 aa).

The segment covering 1–31 (MSETSEDEQTQLQTSDEEEDLGSEEEQEDED) has biased composition (acidic residues). The interval 1-58 (MSETSEDEQTQLQTSDEEEDLGSEEEQEDEDNNHKEGDSEAALSGEDDKGSEDDAAEE) is disordered. The short motif at 61–89 (LTWKDLGLNEALCQACDELKWKAPSKIQR) is the Q motif element. The 172-residue stretch at 92 to 263 (IPVALQGKDV…RASLKDPVKV (172 aa)) folds into the Helicase ATP-binding domain. Position 105-112 (105-112 (AETGSGKT)) interacts with ATP. The short motif at 211-214 (DEAD) is the DEAD box element. Positions 290-434 (YLVHILNELA…LYKCEEDEVM (145 aa)) constitute a Helicase C-terminal domain. Positions 426 to 453 (YKCEEDEVMALQERVAEAQRTAKLELKD) form a coiled coil. Residues 451-471 (LKDLEDTRGGHKRGGDTHDDS) show a composition bias toward basic and acidic residues. The interval 451-507 (LKDLEDTRGGHKRGGDTHDDSENFTGARKRMKPMGGTGGGGRKSFGKKNWSKGKQKR) is disordered. Residues 494–507 (SFGKKNWSKGKQKR) are compositionally biased toward basic residues.

The protein belongs to the DEAD box helicase family. DDX47/RRP3 subfamily.

It is found in the nucleus. The protein localises to the nucleolus. The catalysed reaction is ATP + H2O = ADP + phosphate + H(+). Functionally, part of a translational control module, also containing ath/DHX33 and ais/DDX52, which coordinates germline stem cell differentiation with ribosome biogenesis during oogenesis. This module allows for coregulation of ribosomal proteins and non1/GTPBP4, a p53 repressor, preventing p53 stabilization, cell cycle arrest and loss of stem cell differentiation. With atos, adjusts transcription and translation of a subset of OXPHOS genes in macrophages to increase mitochondrial bioenergetics and allow tissue invasion. The protein is ATP-dependent RNA helicase DDX47 of Drosophila melanogaster (Fruit fly).